Reading from the N-terminus, the 337-residue chain is Angiopoietin-related protein 7 (337 aa).

Residues 1 to 21 form the signal peptide; the sequence is MLRETWLCVILVAFVSHPVWL. Positions 30–110 form a coiled coil; it reads QLKAAGCCEE…DIMQLQAAQT (81 aa). The N-linked (GlcNAc...) asparagine glycan is linked to asparagine 49. Residues 113–334 form the Fibrinogen C-terminal domain; that stretch reads QTSADAIYDC…RVEMKIRPEA (222 aa). A disulfide bridge links cysteine 122 with cysteine 153. N-linked (GlcNAc...) asparagine glycans are attached at residues asparagine 244 and asparagine 258. Cysteine 276 and cysteine 289 form a disulfide bridge. Asparagine 320 carries N-linked (GlcNAc...) asparagine glycosylation.

As to quaternary structure, homotetramer; disulfide-linked.

The protein resides in the secreted. Its function is as follows. Has a role in the formation and organization of the extracellular matrix. In the eye, it functions as a mediator of dexamethasone-induced matrix deposition in the trabecular meshwork, the tissue responsible for the outflow of the ocular aqueous humor and for the maintenance of intraocular pressure. Is a negative regulator of angiogenesis in the cornea, and plays a major role in maintaining corneal avascularity and transparency. This is Angiopoietin-related protein 7 (Angptl7) from Mus musculus (Mouse).